The primary structure comprises 360 residues: Plastid lipid-associated protein 3, chloroplastic (360 aa).

Residues 1-37 (MATLFTVTTTSRPFPANPSKTFSPSISLKPNALSFSL) show a composition bias toward polar residues. Residues 1–52 (MATLFTVTTTSRPFPANPSKTFSPSISLKPNALSFSLTHHRPPRPLRFSKIR) constitute a chloroplast transit peptide. A disordered region spans residues 1 to 130 (MATLFTVTTT…EWEEREADDG (130 aa)). Residues 38-50 (THHRPPRPLRFSK) are compositionally biased toward basic residues. Residues 53 to 68 (SSLPSESDSEPEGGYS) show a composition bias toward low complexity. The span at 117–127 (TNEDEWEEREA) shows a compositional bias: acidic residues.

Belongs to the PAP/fibrillin family. Ubiquitous expression among various organs, but only at a very low level.

Its subcellular location is the plastid. The protein resides in the chloroplast. The chain is Plastid lipid-associated protein 3, chloroplastic (PAP3) from Brassica campestris (Field mustard).